Consider the following 387-residue polypeptide: GTPase Obg (387 aa).

The 159-residue stretch at 1–159 (MKFVDEVEIR…RSLKLELLLL (159 aa)) folds into the Obg domain. The OBG-type G domain occupies 160–333 (ADVGLLGLPN…LTQKVMTFIE (174 aa)). GTP-binding positions include 166–173 (GLPNAGKS), 191–195 (FTTLV), 213–216 (DIPG), 283–286 (NKLD), and 314–316 (SAF). Mg(2+) contacts are provided by Ser-173 and Thr-193. A disordered region spans residues 361 to 387 (AAHSQDDDLDDDDWDEDDYDVEVEYRQ). Acidic residues predominate over residues 367 to 387 (DDLDDDDWDEDDYDVEVEYRQ).

It belongs to the TRAFAC class OBG-HflX-like GTPase superfamily. OBG GTPase family. As to quaternary structure, monomer. Mg(2+) is required as a cofactor.

It is found in the cytoplasm. In terms of biological role, an essential GTPase which binds GTP, GDP and possibly (p)ppGpp with moderate affinity, with high nucleotide exchange rates and a fairly low GTP hydrolysis rate. Plays a role in control of the cell cycle, stress response, ribosome biogenesis and in those bacteria that undergo differentiation, in morphogenesis control. In Colwellia psychrerythraea (strain 34H / ATCC BAA-681) (Vibrio psychroerythus), this protein is GTPase Obg.